Consider the following 95-residue polypeptide: Small ribosomal subunit protein mS37 (95 aa).

The CHCH domain maps to 27 to 69 (ANRCLVLMSNLLQCWSSNGHMNPVCEKLATDLKACTSQNVMGS). 2 short sequence motifs (cx9C motif) span residues 30–40 (CLVLMSNLLQC) and 51–61 (CEKLATDLKAC). Intrachain disulfides connect cysteine 30-cysteine 61 and cysteine 40-cysteine 51.

The protein belongs to the mitochondrion-specific ribosomal protein mS37 family. Component of the mitochondrial small ribosomal subunit.

It localises to the mitochondrion. Involved in mitochondrial genome encoded proteins translation. This is Small ribosomal subunit protein mS37 (MRP10) from Eremothecium gossypii (strain ATCC 10895 / CBS 109.51 / FGSC 9923 / NRRL Y-1056) (Yeast).